Here is a 2000-residue protein sequence, read N- to C-terminus: Sodium channel protein type 3 subunit alpha (2000 aa).

Topologically, residues 1–128 (MAQALLVPPG…KIAIKILVHS (128 aa)) are cytoplasmic. The segment at 28 to 60 (RAAEEKAKKPKKEQDNDDENKPKPNSDLEAGKN) is disordered. Residues 46–57 (ENKPKPNSDLEA) show a composition bias toward basic and acidic residues. An I repeat occupies 110 to 455 (ILTPLNPVRK…QQMLEQLKKQ (346 aa)). The chain crosses the membrane as a helical span at residues 129 to 146 (LFSMLIMCTILTNCVFMT). Residues 147 to 152 (LSNPPD) lie on the Extracellular side of the membrane. A helical membrane pass occupies residues 153-174 (WTKNVEYTFTGIYTFESLIKIL). The Cytoplasmic portion of the chain corresponds to 175-188 (ARGFCLEDFTFLRD). A helical transmembrane segment spans residues 189 to 206 (PWNWLDFSVIVMAYVTEF). At 207-213 (VSLGNVS) the chain is on the extracellular side. Asparagine 211 carries an N-linked (GlcNAc...) asparagine glycan. Residues 214 to 235 (ALRTFRVLRALKTISVIPGLKT) form a helical membrane-spanning segment. Topologically, residues 236 to 249 (IVGALIQSVKKLSD) are cytoplasmic. A helical transmembrane segment spans residues 250 to 269 (VMILTVFCLSVFALIGLQLF). Residues 270–369 (MGNLRNKCLQ…NYGYTSFDTF (100 aa)) are Extracellular-facing. 5 N-linked (GlcNAc...) asparagine glycosylation sites follow: asparagine 290, asparagine 296, asparagine 302, asparagine 307, and asparagine 339. Positions 370–386 (SWAFLSLFRLMTQDYWE) form an intramembrane region, pore-forming. Topologically, residues 387 to 397 (NLYQLTLRAAG) are extracellular. The helical transmembrane segment at 398–424 (KTYMIFFVLVIFLGSFYLVNLILAVVA) threads the bilayer. The Cytoplasmic segment spans residues 425–761 (MAYEEQNQAT…LVNLIVMDPF (337 aa)). Phosphoserine is present on residues serine 484, serine 485, and serine 486. 3 disordered regions span residues 493-528 (SKSAKEWRNRRKKRRQREHLEGNNKGERDSFPKSES), 587-631 (VGSE…ASMS), and 662-681 (ALTSPTGQLPPEGTTTETEV). Positions 500-509 (RNRRKKRRQR) are enriched in basic residues. Basic and acidic residues-rich tracts occupy residues 510 to 528 (EHLEGNNKGERDSFPKSES) and 596 to 610 (DEHSTFEDSESRRDS). A compositionally biased stretch (polar residues) spans 662–678 (ALTSPTGQLPPEGTTTE). The stretch at 742–1014 (CCDAWLKVKH…QIAVGRMQKG (273 aa)) is one II repeat. Residues 762–779 (VDLAITICIVLNTLFMAM) traverse the membrane as a helical segment. Residues 780–787 (EHYPMTEQ) lie on the Extracellular side of the membrane. A helical transmembrane segment spans residues 788–812 (FSSVLTVGNLVFTGIFTAEMVLKII). Over 813–822 (AMDPYYYFQE) the chain is Cytoplasmic. A helical membrane pass occupies residues 823-842 (GWNIFDGIIVSLSLMELGLS). The Extracellular portion of the chain corresponds to 843 to 846 (NVEG). The chain crosses the membrane as a helical span at residues 847 to 865 (LSVLRSFRLLRVFKLAKSW). Residues 866–883 (PTLNMLIKIIGNSVGALG) are Cytoplasmic-facing. The chain crosses the membrane as a helical span at residues 884–904 (NLTLVLAIIVFIFAVVGMQLF). The Extracellular segment spans residues 905–929 (GKSYKECVCKINDDCTLPRWHMNDF). The cysteines at positions 913 and 919 are disulfide-linked. Positions 930–945 (FHSFLIVFRVLCGEWI) form an intramembrane region, pore-forming. At 946-956 (ETMWDCMEVAG) the chain is on the extracellular side. A disulfide bond links cysteine 951 and cysteine 960. The chain crosses the membrane as a helical span at residues 957 to 983 (QTMCLIVFMLVMVIGNLVVLNLFLALL). Residues 984–1205 (LSSFSSDNLA…RKTCYSIVEH (222 aa)) lie on the Cytoplasmic side of the membrane. A disordered region spans residues 1118–1162 (EEFSSESELEESKEKLNATSSSEGSTVDVVLPREGEQAETEPEED). Residues 1188-1499 (KGKIWWNLRK…KKYYNAMKKL (312 aa)) form an III repeat. A helical membrane pass occupies residues 1206–1226 (NWFETFIVFMILLSSGALAFE). Residues 1227-1238 (DIYIEQRKTIKT) lie on the Extracellular side of the membrane. A helical transmembrane segment spans residues 1239–1260 (MLEYADKVFTYIFILEMLLKWV). The Cytoplasmic portion of the chain corresponds to 1261–1266 (AYGFQT). Residues 1267 to 1292 (YFTNAWCWLDFLIVDVSLVSLVANAL) traverse the membrane as a helical segment. Over 1293-1301 (GYSELGAIK) the chain is Extracellular. The helical transmembrane segment at 1302–1320 (SLRTLRALRPLRALSRFEG) threads the bilayer. The Cytoplasmic segment spans residues 1321 to 1333 (MRVVVNALVGAIP). Residues 1334–1356 (SIMNVLLVCLIFWLIFSIMGVNL) traverse the membrane as a helical segment. The Extracellular portion of the chain corresponds to 1357–1402 (FAGKFYHCVNMTTGNMFDISDVNNLSDCQALGKQARWKNVKVNFDN). A disulfide bond links cysteine 1364 and cysteine 1384. N-linked (GlcNAc...) asparagine glycosylation is found at asparagine 1366 and asparagine 1380. Positions 1403 to 1419 (VGAGYLALLQVATFKGW) form an intramembrane region, pore-forming. Residues 1420-1442 (MDIMYAAVDSRDVKLQPVYEENL) are Extracellular-facing. A helical transmembrane segment spans residues 1443 to 1468 (YMYLYFVIFIIFGSFFTLNLFIGVII). The Cytoplasmic segment spans residues 1469-1526 (DNFNQQKKKFGGQDIFMTEEQKKYYNAMKKLGSKKPQKPIPRPANKFQGMVFDFVTRQ). The residue at position 1501 (serine 1501) is a Phosphoserine; by PKC. The stretch at 1508 to 1806 (IPRPANKFQG…WEKFDPDATQ (299 aa)) is one IV repeat. The chain crosses the membrane as a helical span at residues 1527–1545 (VFDISIMILICLNMVTMMV). At 1546–1553 (ETDDQGKY) the chain is on the extracellular side. The chain crosses the membrane as a helical span at residues 1554–1577 (MTLVLSRINLVFIVLFTGEFVLKL). Topologically, residues 1578–1587 (VSLRHYYFTI) are cytoplasmic. Residues 1588–1605 (GWNIFDFVVVILSIVGMF) traverse the membrane as a helical segment. The Extracellular segment spans residues 1606 to 1617 (LAEMIEKYFVSP). A helical membrane pass occupies residues 1618–1640 (TLFRVIRLARIGRILRLIKGAKG). The Cytoplasmic portion of the chain corresponds to 1641-1653 (IRTLLFALMMSLP). The chain crosses the membrane as a helical span at residues 1654–1677 (ALFNIGLLLFLVMFIYAIFGMSNF). Residues 1678 to 1699 (AYVKKEAGIDDMFNFETFGNSM) lie on the Extracellular side of the membrane. The pore-forming intramembrane region spans 1700–1712 (ICLFQITTSAGWD). At 1713 to 1744 (GLLAPILNSAPPDCDPDTIHPGSSVKGDCGNP) the chain is on the extracellular side. The helical transmembrane segment at 1745-1770 (SVGIFFFVSYIIISFLVVVNMYIAVI) threads the bilayer. Residues 1771-2000 (LENFSVATEE…KGKEVRENQK (230 aa)) lie on the Cytoplasmic side of the membrane. Positions 1900-1929 (EEVSAAIIQRNFRCYLLKQRLKNISSNYNK) constitute an IQ domain. The disordered stretch occupies residues 1949 to 2000 (LNGNSTPEKTDGSSSTTSPPSYDSVTKPDKEKFEKDKPEKESKGKEVRENQK). Residues 1974–2000 (TKPDKEKFEKDKPEKESKGKEVRENQK) are compositionally biased toward basic and acidic residues.

It belongs to the sodium channel (TC 1.A.1.10) family. Nav1.3/SCN3A subfamily. In terms of assembly, heterooligomer of an alpha subunit, SCN3A, and 1 to 3 regulatory beta subunits including SCN1B and SCN2B; disulfide-linked with some beta subunits like SCN2B. Interacts with NEDD4L; could regulate expression of SCN3A at the plasma membrane through ubiquitination-regulated endocytosis. Interacts with the conotoxin GVIIJ. May be ubiquitinated by NEDD4L; which would promote its endocytosis. In terms of processing, phosphorylation at Ser-1501 by PKC in a highly conserved cytoplasmic loop slows inactivation of the sodium channel and reduces peak sodium currents. In terms of tissue distribution, expressed in enterochromaffin cells in both colon and small bowel (at protein level).

The protein resides in the cell membrane. It is found in the basal cell membrane. It carries out the reaction Na(+)(in) = Na(+)(out). Functionally, pore-forming subunit of Nav1.3, a voltage-gated sodium (Nav) channel that directly mediates the depolarizing phase of action potentials in excitable membranes. Navs, also called VGSCs (voltage-gated sodium channels) or VDSCs (voltage-dependent sodium channels), operate by switching between closed and open conformations depending on the voltage difference across the membrane. In the open conformation they allow Na(+) ions to selectively pass through the pore, along their electrochemical gradient. The influx of Na+ ions provokes membrane depolarization, initiating the propagation of electrical signals throughout cells and tissues. In some secretory cell types, it also participates in cell excitability through membrane depolarization and regulates cells responsiveness to stimuli triggering secretion. For instance, it controls the release of serotonin/5-hydroxytryptamine by enterochromaffin cells and is required for both glucagon- and glucose-induced insulin secretion in pancreatic endocrine cells. The polypeptide is Sodium channel protein type 3 subunit alpha (Homo sapiens (Human)).